The primary structure comprises 351 residues: Large ribosomal subunit protein uL3 (351 aa).

Disordered stretches follow at residues 1-31 (MGHR…TPRT) and 246-271 (KGSR…GQLG).

The protein belongs to the universal ribosomal protein uL3 family. As to quaternary structure, part of the 50S ribosomal subunit. Forms a cluster with proteins L14 and L24e.

One of the primary rRNA binding proteins, it binds directly near the 3'-end of the 23S rRNA, where it nucleates assembly of the 50S subunit. This chain is Large ribosomal subunit protein uL3, found in Saccharolobus islandicus (strain Y.N.15.51 / Yellowstone #2) (Sulfolobus islandicus).